The sequence spans 875 residues: Alanine--tRNA ligase (875 aa).

Zn(2+)-binding residues include histidine 564, histidine 568, cysteine 666, and histidine 670.

It belongs to the class-II aminoacyl-tRNA synthetase family. As to quaternary structure, homotetramer. Requires Zn(2+) as cofactor.

It localises to the cytoplasm. The catalysed reaction is tRNA(Ala) + L-alanine + ATP = L-alanyl-tRNA(Ala) + AMP + diphosphate. Catalyzes the attachment of alanine to tRNA(Ala) in a two-step reaction: alanine is first activated by ATP to form Ala-AMP and then transferred to the acceptor end of tRNA(Ala). Also edits incorrectly charged Ser-tRNA(Ala) and Gly-tRNA(Ala) via its editing domain. This Sodalis glossinidius (strain morsitans) protein is Alanine--tRNA ligase.